A 215-amino-acid chain; its full sequence is Osteoclast-stimulating factor 1 (215 aa).

Ser-2 bears the N-acetylserine mark. One can recognise an SH3 domain in the interval 12-71; it reads GQVKVFRALYTFEPRTPDELYFEEGDIIYITDMSDTSWWKGTCKGRTGLIPSNYVAEQAE. 3 ANK repeats span residues 72–101, 105–135, and 139–168; these read SIDN…GVNG, AGST…ELNQ, and LGDT…RTDL. Residues 192 to 215 form a disordered region; sequence KQQGTDGARTLSNAEDYLDDEDSD. Phosphothreonine is present on Thr-201. Residues Ser-203 and Ser-214 each carry the phosphoserine modification.

As to quaternary structure, interacts with C-SRC and SMN1. Interacts with FASLG.

Its subcellular location is the cytoplasm. Induces bone resorption, acting probably through a signaling cascade which results in the secretion of factor(s) enhancing osteoclast formation and activity. In Mus musculus (Mouse), this protein is Osteoclast-stimulating factor 1 (Ostf1).